The following is a 21-amino-acid chain: Magainin-B1 (21 aa).

Expressed by the skin glands.

The protein localises to the secreted. Has no antimicrobial activity against tested bacteria. This chain is Magainin-B1, found in Xenopus borealis (Kenyan clawed frog).